Reading from the N-terminus, the 485-residue chain is NADH-quinone oxidoreductase subunit N (485 aa).

14 helical membrane passes run 8-28 (LIAL…MLSI), 35-55 (FLNA…LWFV), 71-91 (GFAM…CTFA), 105-125 (FYLL…ANHL), 127-147 (ALFL…GYAF), 159-179 (YTIL…LVYA), 203-223 (LLAG…LVPF), 235-255 (PAPV…GVVM), 271-291 (VVLG…ALSQ), 297-317 (LLGY…IALQ), 326-346 (VGVY…VVSL), 373-393 (AAVM…LGFI), 408-430 (WWLV…RVAV), and 455-475 (IVVL…QPLI).

This sequence belongs to the complex I subunit 2 family. As to quaternary structure, NDH-1 is composed of 13 different subunits. Subunits NuoA, H, J, K, L, M, N constitute the membrane sector of the complex.

It is found in the cell inner membrane. The catalysed reaction is a quinone + NADH + 5 H(+)(in) = a quinol + NAD(+) + 4 H(+)(out). NDH-1 shuttles electrons from NADH, via FMN and iron-sulfur (Fe-S) centers, to quinones in the respiratory chain. The immediate electron acceptor for the enzyme in this species is believed to be ubiquinone. Couples the redox reaction to proton translocation (for every two electrons transferred, four hydrogen ions are translocated across the cytoplasmic membrane), and thus conserves the redox energy in a proton gradient. In Salmonella arizonae (strain ATCC BAA-731 / CDC346-86 / RSK2980), this protein is NADH-quinone oxidoreductase subunit N.